A 464-amino-acid chain; its full sequence is Anthocyanidin 3-O-galactosyltransferase 3GT1 (464 aa).

Residues serine 19 and histidine 21 each coordinate an anthocyanidin. Catalysis depends on histidine 21, which acts as the Proton acceptor. Asparagine 38 carries N-linked (GlcNAc...) asparagine glycosylation. Aspartate 121 acts as the Charge relay in catalysis. Histidine 152 lines the an anthocyanidin pocket. Alanine 342, glutamine 344, histidine 359, tryptophan 362, asparagine 363, serine 364, and glutamate 367 together coordinate UDP-alpha-D-glucose. Residue glycine 382 participates in an anthocyanidin binding. Aspartate 383 contributes to the UDP-alpha-D-glucose binding site.

This sequence belongs to the UDP-glycosyltransferase family. Monomer. In terms of tissue distribution, mostly expressed in leaves and flowers and, to a lower extent, in roots. In flowers, mainly observed in petals, toruses and scapes, and at lower levels in pistils and stamens.

The catalysed reaction is cyanidin + UDP-alpha-D-galactose = cyanidin 3-O-beta-D-galactoside + UDP + H(+). It carries out the reaction cyanidin + UDP-alpha-D-glucose = cyanidin 3-O-beta-D-glucoside + UDP + H(+). It catalyses the reaction delphinidin + UDP-alpha-D-glucose = delphinidin 3-O-beta-D-glucoside + UDP. The enzyme catalyses malvidin + UDP-alpha-D-glucose = malvidin 3-O-beta-D-glucoside + UDP. The catalysed reaction is delphinidin + UDP-alpha-D-galactose = delphinidin 3-O-beta-D-galactoside + UDP + H(+). It carries out the reaction pelargonidin + UDP-alpha-D-galactose = pelargonidin 3-O-beta-D-galactoside betaine + UDP. It catalyses the reaction peonidin + UDP-alpha-D-galactose = peonidin 3-O-beta-D-galactoside + UDP. The enzyme catalyses malvidin + UDP-alpha-D-galactose = malvidin 3-O-beta-D-galactoside + UDP + H(+). The catalysed reaction is petunidin + UDP-alpha-D-galactose = petunidin 3-O-beta-D-galactoside + UDP. It carries out the reaction an anthocyanidin + UDP-alpha-D-glucose + H(+) = an anthocyanidin 3-O-beta-D-glucoside + UDP. It catalyses the reaction an anthocyanidin + UDP-alpha-D-galactose = an anthocyanidin 3-O-beta-D-galactoside + UDP. Its pathway is pigment biosynthesis; anthocyanin biosynthesis. In terms of biological role, flavonoid 3-O-glycosyltransferase involved in the biosynthesis of anthocyanins conferring flower red/pink colors, mainly anthocyanidin 3-O-glycosides. Catalyzes the addition of UDP-sugar to the 3-OH of anthocyanidin, with a preference for UDP-galactose (UDP-Gal) as sugar donor and cyanidin as substrate; able to use delphinidin, pelargonidin, peonidin, malvidin and petunidin as substrates in the presence of UDP-Gal. Can also use UDP-glucose (UDP-Glu) as sugar donor with delphinidin, cyanidin and malvidin as substrates, but not active on pelargonidin, peonidin and petunidin. This chain is Anthocyanidin 3-O-galactosyltransferase 3GT1, found in Rhododendron delavayi (Rhododendron).